We begin with the raw amino-acid sequence, 243 residues long: tRNA (guanine-N(1)-)-methyltransferase (243 aa).

Residues Gly108 and 127-132 each bind S-adenosyl-L-methionine; that span reads LGDFVL.

It belongs to the RNA methyltransferase TrmD family. Homodimer.

It localises to the cytoplasm. It carries out the reaction guanosine(37) in tRNA + S-adenosyl-L-methionine = N(1)-methylguanosine(37) in tRNA + S-adenosyl-L-homocysteine + H(+). Specifically methylates guanosine-37 in various tRNAs. This chain is tRNA (guanine-N(1)-)-methyltransferase, found in Streptococcus equi subsp. zooepidemicus (strain MGCS10565).